The chain runs to 504 residues: tRNA (uracil-5-)-methyltransferase homolog B (504 aa).

The N-terminal 16 residues, 1 to 16 (MAGLKRRVPLHSLRYF), are a transit peptide targeting the mitochondrion. S-adenosyl-L-methionine-binding residues include Gln323, Glu373, and Asn423. The active-site Nucleophile is the Cys451. The active-site Proton acceptor is the Glu497.

The protein belongs to the class I-like SAM-binding methyltransferase superfamily. RNA M5U methyltransferase family.

It is found in the mitochondrion. Its subcellular location is the mitochondrion matrix. It catalyses the reaction uridine(54) in tRNA + S-adenosyl-L-methionine = 5-methyluridine(54) in tRNA + S-adenosyl-L-homocysteine + H(+). The catalysed reaction is a uridine in 12S rRNA + S-adenosyl-L-methionine = a 5-methyluridine in 12S rRNA + S-adenosyl-L-homocysteine + H(+). In terms of biological role, mitochondrial S-adenosyl-L-methionine-dependent methyltransferase that catalyzes the formation of 5-methyl-uridine in tRNAs and 12S rRNA. Catalyzes the methylation of uridine at position 54 (m5U54) in all tRNAs. Specifically methylates the uridine in position 429 of 12S rRNA (m5U429). Does not affect RNA stability or mitochondrial translation. In Homo sapiens (Human), this protein is tRNA (uracil-5-)-methyltransferase homolog B.